The chain runs to 109 residues: Probable cytochrome b-c1 complex subunit 7 (109 aa).

Belongs to the UQCRB/QCR7 family. Component of the ubiquinol-cytochrome c oxidoreductase (cytochrome b-c1 complex, complex III, CIII), a multisubunit enzyme composed of 3 respiratory subunits cytochrome b, cytochrome c1 and Rieske protein, 2 core protein subunits, and additional low-molecular weight protein subunits. The complex exists as an obligatory dimer and forms supercomplexes (SCs) in the inner mitochondrial membrane with cytochrome c oxidase (complex IV, CIV).

The protein resides in the mitochondrion inner membrane. Functionally, component of the ubiquinol-cytochrome c oxidoreductase, a multisubunit transmembrane complex that is part of the mitochondrial electron transport chain which drives oxidative phosphorylation. The respiratory chain contains 3 multisubunit complexes succinate dehydrogenase (complex II, CII), ubiquinol-cytochrome c oxidoreductase (cytochrome b-c1 complex, complex III, CIII) and cytochrome c oxidase (complex IV, CIV), that cooperate to transfer electrons derived from NADH and succinate to molecular oxygen, creating an electrochemical gradient over the inner membrane that drives transmembrane transport and the ATP synthase. The cytochrome b-c1 complex catalyzes electron transfer from ubiquinol to cytochrome c, linking this redox reaction to translocation of protons across the mitochondrial inner membrane, with protons being carried across the membrane as hydrogens on the quinol. In the process called Q cycle, 2 protons are consumed from the matrix, 4 protons are released into the intermembrane space and 2 electrons are passed to cytochrome c. The chain is Probable cytochrome b-c1 complex subunit 7 from Dictyostelium discoideum (Social amoeba).